Reading from the N-terminus, the 426-residue chain is Glutamyl-tRNA reductase (426 aa).

Substrate contacts are provided by residues 49–52 (TCNR), S101, 106–108 (EPQ), and Q112. Catalysis depends on C50, which acts as the Nucleophile. 181–186 (GAGETI) lines the NADP(+) pocket. The segment at 404–426 (DRLFPEKPGLPTSPHSYPDREDR) is disordered.

The protein belongs to the glutamyl-tRNA reductase family. In terms of assembly, homodimer.

The catalysed reaction is (S)-4-amino-5-oxopentanoate + tRNA(Glu) + NADP(+) = L-glutamyl-tRNA(Glu) + NADPH + H(+). The protein operates within porphyrin-containing compound metabolism; protoporphyrin-IX biosynthesis; 5-aminolevulinate from L-glutamyl-tRNA(Glu): step 1/2. In terms of biological role, catalyzes the NADPH-dependent reduction of glutamyl-tRNA(Glu) to glutamate 1-semialdehyde (GSA). This is Glutamyl-tRNA reductase from Xanthomonas campestris pv. phaseoli.